The following is a 240-amino-acid chain: Orotidine 5'-phosphate decarboxylase (240 aa).

Substrate contacts are provided by residues Asp19, Lys41, 68 to 77 (DYKYYDIEET), Thr123, Arg184, Gln193, Gly213, and Arg214. The active-site Proton donor is Lys70.

The protein belongs to the OMP decarboxylase family. Type 1 subfamily. In terms of assembly, homodimer.

It catalyses the reaction orotidine 5'-phosphate + H(+) = UMP + CO2. Its pathway is pyrimidine metabolism; UMP biosynthesis via de novo pathway; UMP from orotate: step 2/2. Functionally, catalyzes the decarboxylation of orotidine 5'-monophosphate (OMP) to uridine 5'-monophosphate (UMP). This is Orotidine 5'-phosphate decarboxylase from Nitrobacter winogradskyi (strain ATCC 25391 / DSM 10237 / CIP 104748 / NCIMB 11846 / Nb-255).